The chain runs to 991 residues: Glutamate receptor 1 (991 aa).

The first 27 residues, 1 to 27, serve as a signal peptide directing secretion; the sequence is MHSRLKFLAYLHFICASSIFWPEFSSA. The Extracellular portion of the chain corresponds to 28–611; sequence QQQQQTVSLT…VFSFLNPLSQ (584 aa). 4 N-linked (GlcNAc...) asparagine glycosylation sites follow: Asn-67, Asn-195, Asn-208, and Asn-281. Disordered regions lie at residues 300–321 and 354–379; these read DSRKRLEPSGQSQSQNAGGPNS and FRSNHLQRRSHGGSSSSSATGTNESS. Positions 308–318 are enriched in polar residues; the sequence is SGQSQSQNAGG. Low complexity predominate over residues 365 to 379; the sequence is GGSSSSSATGTNESS. Residues Asn-376, Asn-385, Asn-426, Asn-437, and Asn-477 are each glycosylated (N-linked (GlcNAc...) asparagine). A helical membrane pass occupies residues 612-632; the sequence is EIWISVILSYVGVSFVLYFVT. Residues 633–710 are Cytoplasmic-facing; the sequence is RFPPYEWRIV…PSIAGRIAAA (78 aa). Residues 711–731 traverse the membrane as a helical segment; it reads VWWFFTIILISSYTANLAAFL. Over 732–895 the chain is Extracellular; it reads TVERMVAPIK…STPNELSLSN (164 aa). A helical transmembrane segment spans residues 896–916; sequence VAGIYYILIGGLLLAVIVAIM. Residues 917–991 are Cytoplasmic-facing; that stretch reads EFFCRNKTPQ…ASNVRYQYSM (75 aa).

The protein belongs to the glutamate-gated ion channel (TC 1.A.10.1) family. As to quaternary structure, homooligomer. In terms of tissue distribution, central nervous system.

It is found in the cell membrane. Its subcellular location is the postsynaptic cell membrane. Its function is as follows. Receptor for glutamate. L-glutamate acts as an excitatory neurotransmitter at many synapses in the central nervous system. The postsynaptic actions of Glu are mediated by a variety of receptors that are named according to their selective agonists. Forms ligand-gated ion channels which are activated by kainate. The sequence is that of Glutamate receptor 1 (GluRIA) from Drosophila melanogaster (Fruit fly).